The sequence spans 173 residues: Nicotinamide-nucleotide adenylyltransferase (173 aa).

The protein belongs to the archaeal NMN adenylyltransferase family.

It localises to the cytoplasm. It carries out the reaction beta-nicotinamide D-ribonucleotide + ATP + H(+) = diphosphate + NAD(+). The protein operates within cofactor biosynthesis; NAD(+) biosynthesis; NAD(+) from nicotinamide D-ribonucleotide: step 1/1. This is Nicotinamide-nucleotide adenylyltransferase from Methanosarcina acetivorans (strain ATCC 35395 / DSM 2834 / JCM 12185 / C2A).